The sequence spans 204 residues: dITP/XTP pyrophosphatase (204 aa).

Residue 14–19 (THNKGK) participates in substrate binding. Mg(2+) is bound by residues Glu-46 and Asp-75. The active-site Proton acceptor is Asp-75. Residues Ser-76, 161 to 164 (FGYD), Lys-184, and 189 to 190 (HR) contribute to the substrate site.

This sequence belongs to the HAM1 NTPase family. In terms of assembly, homodimer. It depends on Mg(2+) as a cofactor.

The enzyme catalyses XTP + H2O = XMP + diphosphate + H(+). It catalyses the reaction dITP + H2O = dIMP + diphosphate + H(+). It carries out the reaction ITP + H2O = IMP + diphosphate + H(+). Pyrophosphatase that catalyzes the hydrolysis of nucleoside triphosphates to their monophosphate derivatives, with a high preference for the non-canonical purine nucleotides XTP (xanthosine triphosphate), dITP (deoxyinosine triphosphate) and ITP. Seems to function as a house-cleaning enzyme that removes non-canonical purine nucleotides from the nucleotide pool, thus preventing their incorporation into DNA/RNA and avoiding chromosomal lesions. The polypeptide is dITP/XTP pyrophosphatase (Ruegeria pomeroyi (strain ATCC 700808 / DSM 15171 / DSS-3) (Silicibacter pomeroyi)).